The primary structure comprises 462 residues: Protoheme IX farnesyltransferase, mitochondrial (462 aa).

A mitochondrion-targeting transit peptide spans 1–30; the sequence is MSYFPRTYAHLMRNVLAHNKGNIYLQIGTQ. 7 helical membrane passes run 158-178, 234-254, 274-294, 298-318, 352-372, 373-393, and 425-445; these read TILV…PASV, LIGT…VAIL, IINT…GWAA, LSHP…FPHF, YSIL…TDWY, YQID…KFYW, and FMAS…HKKG.

The protein belongs to the UbiA prenyltransferase family. As to quaternary structure, forms ~370 kDa homooligomeric complexes.

It localises to the mitochondrion. It is found in the mitochondrion membrane. The catalysed reaction is heme b + (2E,6E)-farnesyl diphosphate + H2O = Fe(II)-heme o + diphosphate. The protein operates within porphyrin-containing compound metabolism; heme O biosynthesis; heme O from protoheme: step 1/1. Its activity is regulated as follows. Positively regulated by the hydroxylated intermediate (heme I) formed at the subsequent step, or by HAS/COX15 itself. Its function is as follows. Catalyzes the first reaction in the biosynthesis of heme A, a prosthetic group of mitochondrial cytochrome c oxidase (CcO). Heme A is synthesized from heme B by two sequential enzymatic reactions catalyzed by heme O synthase (HOS/COX10) and heme A synthase (HAS/COX15). HOS converts heme B (protoheme IX) to heme O by substitution of the vinyl group on carbon 2 of heme B porphyrin ring with a hydroxyethyl farnesyl side group. This Saccharomyces cerevisiae (strain ATCC 204508 / S288c) (Baker's yeast) protein is Protoheme IX farnesyltransferase, mitochondrial (COX10).